A 427-amino-acid polypeptide reads, in one-letter code: Gamma-glutamyl phosphate reductase (427 aa).

It belongs to the gamma-glutamyl phosphate reductase family.

It is found in the cytoplasm. The enzyme catalyses L-glutamate 5-semialdehyde + phosphate + NADP(+) = L-glutamyl 5-phosphate + NADPH + H(+). Its pathway is amino-acid biosynthesis; L-proline biosynthesis; L-glutamate 5-semialdehyde from L-glutamate: step 2/2. Functionally, catalyzes the NADPH-dependent reduction of L-glutamate 5-phosphate into L-glutamate 5-semialdehyde and phosphate. The product spontaneously undergoes cyclization to form 1-pyrroline-5-carboxylate. In Streptomyces griseus subsp. griseus (strain JCM 4626 / CBS 651.72 / NBRC 13350 / KCC S-0626 / ISP 5235), this protein is Gamma-glutamyl phosphate reductase.